The primary structure comprises 203 residues: Dual-action ribosomal maturation protein DarP (203 aa).

Disordered stretches follow at residues 1–31 (MRPM…SKSQ) and 183–203 (GASD…DDEA). Positions 186–203 (DSDDEAAGDAGDDHDDEA) are enriched in acidic residues.

It belongs to the DarP family.

It is found in the cytoplasm. Its function is as follows. Member of a network of 50S ribosomal subunit biogenesis factors which assembles along the 30S-50S interface, preventing incorrect 23S rRNA structures from forming. Promotes peptidyl transferase center (PTC) maturation. The protein is Dual-action ribosomal maturation protein DarP of Burkholderia cenocepacia (strain ATCC BAA-245 / DSM 16553 / LMG 16656 / NCTC 13227 / J2315 / CF5610) (Burkholderia cepacia (strain J2315)).